Consider the following 344-residue polypeptide: Protein BREVIS RADIX (344 aa).

One can recognise a BRX 1 domain in the interval 139–194 (KEWMAQVEPGVHITFASLPTGGNDLKRIRFSREMFDKWQAQRWWGENYDKIVELYN). The disordered stretch occupies residues 203 to 286 (LQTPARSDDQ…DPPSMSNASE (84 aa)). Residues 223–233 (DSARESKDWTP) are compositionally biased toward basic and acidic residues. The span at 248–264 (YGGSSNYGPGSYHGGPP) shows a compositional bias: low complexity. The BRX 2 domain occupies 289 to 344 (AEWIEEDEPGVYITIRQLSDGTRELRRVRFSRERFGEVHAKTWWEQNRERIQTQYL).

This sequence belongs to the BRX family. As to quaternary structure, homodimer and heterodimer with BRXL1. Interacts with NGA1 and ARF5. In terms of tissue distribution, expressed in the developing protophloem up to the elongation zone in root meristem of young seedlings, in the columella and the phloem vasculature throughout the root and in the phloem vasculature in the shoot. Detected in the shoot meristem and in primordia. Low expression in stomata. Confined to sieve element precursor cells and to protophloem.

It localises to the nucleus. The protein resides in the cell membrane. Functionally, acts as a regulator of cell proliferation and elongation in the root and shoot. Regulates roots architecture and primary root protophloem differentiation. BRX, BAM3, and CLE45 act together to regulate the transition of protophloem cells from proliferation to differentiation, thus impinging on postembryonic growth capacity of the root meristem. Probable transcription regulator. Regulated by the auxin response factor ARF5. Polarly localized in vascular cells and subject to endocytic recycling. Required for CPD expression and for correct nuclear auxin response. Mediates cross-talk between the auxin and brassinosteroid pathways. BRX is a target for auxin-induced, proteasome-mediated degradation. This chain is Protein BREVIS RADIX, found in Arabidopsis thaliana (Mouse-ear cress).